The following is a 184-amino-acid chain: Peptide deformylase (184 aa).

The Fe cation site is built by Cys-98 and His-140. Residue Glu-141 is part of the active site. His-144 lines the Fe cation pocket.

The protein belongs to the polypeptide deformylase family. Requires Fe(2+) as cofactor.

The catalysed reaction is N-terminal N-formyl-L-methionyl-[peptide] + H2O = N-terminal L-methionyl-[peptide] + formate. In terms of biological role, removes the formyl group from the N-terminal Met of newly synthesized proteins. Requires at least a dipeptide for an efficient rate of reaction. N-terminal L-methionine is a prerequisite for activity but the enzyme has broad specificity at other positions. The sequence is that of Peptide deformylase from Bacteroides thetaiotaomicron (strain ATCC 29148 / DSM 2079 / JCM 5827 / CCUG 10774 / NCTC 10582 / VPI-5482 / E50).